A 485-amino-acid polypeptide reads, in one-letter code: Silicon efflux transporter LSI3 (485 aa).

The next 5 helical transmembrane spans lie at 14–34 (VAFG…LPIG), 37–57 (AGAL…ADDA), 59–79 (ASID…GGYL), 106–126 (VCVV…CVVL), and 180–200 (FLLG…LMLL). Residues 233 to 242 (ALNNNKKDDG) show a composition bias toward basic and acidic residues. Residues 233-261 (ALNNNKKDDGDAATPASPEDDDGGDAESM) are disordered. 5 helical membrane-spanning segments follow: residues 283–303 (LFLK…YMLG), 336–356 (LLVF…TGLP), 377–397 (VLSV…TVLL), 418–438 (WLLL…GSAA), and 461–481 (HVIF…PLIG).

This sequence belongs to the arsenite-antimonite (ArsB) efflux (TC 2.A.45) family.

Its subcellular location is the cell membrane. In terms of biological role, silicon efflux transporter involved in silicon transport in shoots. In the nodes, involved with LSI2 and NIP2-2/LSI6 in silicon intervascular transfer, which is required for the preferential distribution of silicon, such as hyperaccumulation of silicon in the husk. Silicon is beneficial to plant growth and helps plants to overcome abiotic and biotic stresses by preventing lodging (falling over) and increasing resistance to pests and diseases, as well as other stresses. The polypeptide is Silicon efflux transporter LSI3 (Oryza sativa subsp. japonica (Rice)).